A 221-amino-acid chain; its full sequence is Ribosomal RNA small subunit methyltransferase Nep1 (221 aa).

Residues glycine 174, glycine 179, and 196 to 201 each bind S-adenosyl-L-methionine; that span reads LGEVAM.

This sequence belongs to the class IV-like SAM-binding methyltransferase superfamily. RNA methyltransferase NEP1 family. As to quaternary structure, homodimer.

The enzyme catalyses a pseudouridine in rRNA + S-adenosyl-L-methionine = an N(1)-methylpseudouridine in rRNA + S-adenosyl-L-homocysteine + H(+). In terms of biological role, methyltransferase involved in ribosomal biogenesis. Specifically catalyzes the N1-methylation of the pseudouridine corresponding to position 914 in M.jannaschii 16S rRNA. This Pyrobaculum arsenaticum (strain DSM 13514 / JCM 11321 / PZ6) protein is Ribosomal RNA small subunit methyltransferase Nep1.